A 314-amino-acid chain; its full sequence is Dihydropteroate synthase (314 aa).

The Pterin-binding domain occupies 10–294 (TVICGIINVT…DVASHRMAVE (285 aa)). Asparagine 17 serves as a coordination point for Mg(2+). Residues aspartate 91, asparagine 110, aspartate 201, lysine 237, and 282-284 (RVH) contribute to the (7,8-dihydropterin-6-yl)methyl diphosphate site.

The protein belongs to the DHPS family. Homodimer. Mg(2+) serves as cofactor.

The enzyme catalyses (7,8-dihydropterin-6-yl)methyl diphosphate + 4-aminobenzoate = 7,8-dihydropteroate + diphosphate. It participates in cofactor biosynthesis; tetrahydrofolate biosynthesis; 7,8-dihydrofolate from 2-amino-4-hydroxy-6-hydroxymethyl-7,8-dihydropteridine diphosphate and 4-aminobenzoate: step 1/2. Is potently inhibited by sulfonamides, with Ki values between 25 nM and 850 nM. In terms of biological role, catalyzes the condensation of para-aminobenzoate (pABA) with 6-hydroxymethyl-7,8-dihydropterin diphosphate (DHPt-PP) to form 7,8-dihydropteroate, the immediate precursor of folate derivatives. Is the target for the sulfonamide group of antimicrobial drugs. Sulfonamide drugs act as pABA analogs, they inhibit the reaction by acting as alternative substrates, leading to a 'dead end' sulfa-pterin product. The chain is Dihydropteroate synthase (sulA) from Streptococcus pneumoniae (strain ATCC BAA-255 / R6).